The following is a 426-amino-acid chain: MNSNKELMQRRSQAIPRGVGQIHPIFADRAENCRVWDVEGREYLDFAGGIAVLNTGHLHPKVVAAVEAQLKKLSHTCFQVLAYEPYLELCEIMNQKVPGDFAKKTLLVTTGSEAVENAVKIARAATKRSGTIAFSGAYHGRTHYTLALTGKVNPYSAGMGLMPGHVYRALYPCPLHGISEDDAIASIHRIFKNDAAPEDIAAIVIEPVQGEGGFYASSPAFMQRLRALCDEHGIMLIADEVQSGAGRTGTLFAMEQMGVAPDLTTFAKSIAGGFPLAGVTGRAEVMDAVAPGGLGGTYAGNPIACVAALEVLKVFEQENLLQKANDLGQKLKDGLLAIAEKHPEIGDVRGLGAMIAIELFEDGDHNKPDAKLTAEIVARARDKGLILLSCGPYYNVLRILVPLTIEDAQIRQGLEIISQCFDEAKQ.

Residues 111-112 (GS) and Gln-242 contribute to the pyridoxal 5'-phosphate site. At Lys-268 the chain carries N6-(pyridoxal phosphate)lysine. Thr-297 serves as a coordination point for pyridoxal 5'-phosphate.

It belongs to the class-III pyridoxal-phosphate-dependent aminotransferase family. In terms of assembly, homotetramer. The cofactor is pyridoxal 5'-phosphate.

The catalysed reaction is 4-aminobutanoate + 2-oxoglutarate = succinate semialdehyde + L-glutamate. The enzyme catalyses 5-aminopentanoate + 2-oxoglutarate = 5-oxopentanoate + L-glutamate. It participates in amino-acid degradation; 4-aminobutanoate degradation. The protein operates within amino-acid degradation. Pyridoxal phosphate-dependent enzyme that catalyzes transamination between primary amines and alpha-keto acids. Catalyzes the transfer of the amino group from gamma-aminobutyrate (GABA) to alpha-ketoglutarate (KG) to yield succinic semialdehyde (SSA) and glutamate. Thereby functions in a GABA degradation pathway that allows some E.coli strains to utilize GABA as a nitrogen source for growth. Also catalyzes the conversion of 5-aminovalerate to glutarate semialdehyde, as part of a L-lysine degradation pathway that proceeds via cadaverine, glutarate and L-2-hydroxyglutarate. The chain is 4-aminobutyrate aminotransferase GabT (gabT) from Escherichia coli (strain K12).